The following is a 784-amino-acid chain: DNA ligase (784 aa).

NAD(+)-binding positions include 31 to 35 (DAEYD), 80 to 81 (SL), and Glu-120. Lys-122 functions as the N6-AMP-lysine intermediate in the catalytic mechanism. NAD(+) contacts are provided by Arg-143, Glu-180, Lys-296, and Lys-320. The Zn(2+) site is built by Cys-414, Cys-417, Cys-444, and Cys-450. The 84-residue stretch at 701–784 (AEGLPLAGQT…AFMAEQGITL (84 aa)) folds into the BRCT domain.

It belongs to the NAD-dependent DNA ligase family. LigA subfamily. It depends on Mg(2+) as a cofactor. The cofactor is Mn(2+).

The catalysed reaction is NAD(+) + (deoxyribonucleotide)n-3'-hydroxyl + 5'-phospho-(deoxyribonucleotide)m = (deoxyribonucleotide)n+m + AMP + beta-nicotinamide D-nucleotide.. In terms of biological role, DNA ligase that catalyzes the formation of phosphodiester linkages between 5'-phosphoryl and 3'-hydroxyl groups in double-stranded DNA using NAD as a coenzyme and as the energy source for the reaction. It is essential for DNA replication and repair of damaged DNA. The polypeptide is DNA ligase (Pseudomonas entomophila (strain L48)).